The following is a 95-amino-acid chain: MTSPVNVDVKLGVNKFNVDEDSPHIILKTDPDKQALEVLIKACPAGLYKKQDDGSVRFDYAGCLECGTCRILGLDTALEKWEYPRGTFGVEFRYG.

This sequence belongs to the bacterial-type ferredoxin family. FixX subfamily.

Its function is as follows. Could be part of an electron transfer system required for anaerobic carnitine reduction. Could be a 3Fe-4S cluster-containing protein. This chain is Ferredoxin-like protein FixX (fixX), found in Salmonella typhimurium (strain LT2 / SGSC1412 / ATCC 700720).